A 268-amino-acid chain; its full sequence is MNMKKWIAAALACSALALSACGGQGKDAAAPAANPGKVYRVASNAEFAPFESLDSKGNVEGFDVDLMNAMAKAGNFKIEFKHQPWDSLFPALNNGDADIVMSGVTITDDRKQSMDFSDPYFEITQVVLVPKGKKVSSSDDLKKMNKVGVVTGHTGDFSVSKLLGNDNPKIARFENVPLIIKELENGGLDSVVSDSAVIANYVKNNPAKGMDFVTLPDFTTEHYGIAVRKGDEATVKMLNDALEKVRESGEYDKIYAKYFAKEGGQAAK.

The signal sequence occupies residues 1-20; that stretch reads MNMKKWIAAALACSALALSA. Residue cysteine 21 is the site of N-palmitoyl cysteine attachment. The S-diacylglycerol cysteine moiety is linked to residue cysteine 21.

The protein belongs to the bacterial solute-binding protein 3 family.

Its subcellular location is the cell membrane. In terms of biological role, involved in histidine transport. This Neisseria gonorrhoeae protein is Probable histidine-binding protein (hisJ).